The primary structure comprises 350 residues: Izumo sperm-egg fusion protein 1 (350 aa).

The signal sequence occupies residues 1-21 (MGPHFTLLCAALAGCLLPAEG). 5 disulfides stabilise this stretch: Cys-22-Cys-149, Cys-25-Cys-152, Cys-135-Cys-159, Cys-139-Cys-165, and Cys-182-Cys-233. Residues 22–292 (CVICDPSVVL…LQPEKMLASR (271 aa)) are Extracellular-facing. The segment at 148 to 160 (WCKNCKKEVHACR) is important for interaction with IZUMO1R. One can recognise an Ig-like C2-type domain in the interval 167-251 (ERNVEVPQME…PATIINFHVT (85 aa)). N-linked (GlcNAc...) asparagine glycosylation is present at Asn-204. Residues 293–313 (LLGLLICGSLALITGLTFAIF) form a helical membrane-spanning segment. Over 314 to 350 (RRRKVIDFIKSSLFGLGSGAAEQTQVPKEKATDSRQQ) the chain is Cytoplasmic. Ser-325 bears the Phosphoserine mark.

The protein belongs to the Izumo family. In terms of assembly, monomer, homodimer; disulfide-linked and homooligomer; depending on the context. Interacts with IZUMO1R/JUNO. IZUMO1 and IZUMO1R/JUNO form a complex with 1:1 stoichiometry. In gamete recognition, IZUMO1R/JUNO first binds to monomeric IZUMO1. The weak, but specific interaction with IZUMO1R/JUNO induces IZUMO1 homodimerization. The process follows a tight binding phase where IZUMO1 bends the entire structure towards the sperm membrane side through a thiol-disulfide exchange reaction. The molecule no longer binds to IZUMO1R/JUNO and instead binds to a putative second oocyte receptor. Interacts with ACE3. Part of a oolemmal binding multimeric complex (IZUMO1 complex) composed at least of IZUMO1 and GLIPR1L1; the complex assemblage is influenced by the maturation status of the male germ cell. Interacts with GLIPR1L1. Interacts with FREY; the interaction retains IZUMO1 at the endoplasmic reticulum membrane and coordinates IZUMO1 complex assembly. Interacts with FCRL3/MAIA (via extracellular domain); the interaction replaces IZUMO1R/JUNO as IZUMO1 receptor after sperm-egg adhesion. Interacts with WDR54. Forms a complex with SPACA6 and TMEM81 on spermatocyte cell membrane. In terms of processing, N-glycosylated. Glycosylation is not essential for fusion and for proper protein trafficking in sperm. Phosphorylated. The cytoplasmic C-terminus is phosphorylated and undergoes phosphorylation changes during epididymal transit. Sperm-specific (at protein level). Detectable on sperm surface only after the acrosome reaction.

It is found in the cell membrane. Its subcellular location is the cytoplasmic vesicle. The protein resides in the secretory vesicle. The protein localises to the acrosome membrane. Functionally, essential sperm cell-surface protein required for fertilization by acting as a ligand for IZUMO1R/JUNO receptor on egg. The IZUMO1:IZUMO1R/JUNO interaction is a necessary adhesion event between sperm and egg that is required for fertilization but is not sufficient for cell fusion. The ligand-receptor interaction probably does not act as a membrane 'fusogen'. Acts a ligand for the human-specific oolemma epitope FCRL3/MAIA during fertilization. FCRL3/MAIA replaces IZUMO1R/JUNO as IZUMO1 receptor after sperm-egg adhesion, which permits species-specific gamete fusion. Plays a critical role in sperm-oolemma binding prior to plasma membrane fusion. Can mediate cell-cell fusion in cultured mammalian cells independently of its binding to IZUMO1R/JUNO. The polypeptide is Izumo sperm-egg fusion protein 1 (Homo sapiens (Human)).